We begin with the raw amino-acid sequence, 649 residues long: Nitrosuccinic acid synthase npaA (649 aa).

Belongs to the nitrosuccinic acid synthase family. The cofactor is FAD.

It catalyses the reaction L-aspartate + 3 NADPH + 3 O2 + 2 H(+) = 2-nitrobutanedioate + 3 NADP(+) + 4 H2O. Its pathway is mycotoxin biosynthesis. Functionally, nitrosuccinic acid synthase; part of the gene cluster that mediates the biosynthesis of the deadly neurotoxic nitroalkane 3-nitropropanoic acid (3-NPA) that acts as an antimetabolite of succinate and irreversibly inhibits succinate dehydrogenase and disrupts mitochondrial oxidative phosphorylation. NpaA catalyzes the iterative oxidation of L-aspartic acid to nitrosuccinic acid (2-nitrobutanedioate). Alternative amino acid substrates such as L-glutamate and D-aspartate are not accepted by npaA as a substrate, showing the strict substrate specificity toward L-aspartate. The nitrosuccinic acid decarboxylase npaB then facilitates decarboxylation of Nitrosuccinic acid to produce 3-NPA. The polypeptide is Nitrosuccinic acid synthase npaA (Aspergillus oryzae (strain ATCC 42149 / RIB 40) (Yellow koji mold)).